Reading from the N-terminus, the 131-residue chain is Holo-[acyl-carrier-protein] synthase (131 aa).

Positions 8 and 62 each coordinate Mg(2+).

It belongs to the P-Pant transferase superfamily. AcpS family. It depends on Mg(2+) as a cofactor.

Its subcellular location is the cytoplasm. The enzyme catalyses apo-[ACP] + CoA = holo-[ACP] + adenosine 3',5'-bisphosphate + H(+). Its function is as follows. Transfers the 4'-phosphopantetheine moiety from coenzyme A to a Ser of acyl-carrier-protein. In Delftia acidovorans (strain DSM 14801 / SPH-1), this protein is Holo-[acyl-carrier-protein] synthase.